The following is a 73-amino-acid chain: U-scoloptoxin(15)-Sa1a (73 aa).

The first 20 residues, 1–20 (MKFHIIFCLLAALMMTSAFA), serve as a signal peptide directing secretion.

The protein belongs to the scoloptoxin-15 family. In terms of processing, contains 2 disulfide bonds. Expressed by the venom gland.

It is found in the secreted. This chain is U-scoloptoxin(15)-Sa1a, found in Scolopendra alternans (Florida Keys giant centipede).